Reading from the N-terminus, the 154-residue chain is Myoglobin (154 aa).

The 147-residue stretch at 2 to 148 folds into the Globin domain; the sequence is GLSDGEWQLV…FRNDMAAKYK (147 aa). S4 bears the Phosphoserine mark. H65 contacts nitrite. H65 is an O2 binding site. T68 carries the phosphothreonine modification. H94 contributes to the heme b binding site.

It belongs to the globin family. In terms of assembly, monomeric.

The protein resides in the cytoplasm. Its subcellular location is the sarcoplasm. It carries out the reaction Fe(III)-heme b-[protein] + nitric oxide + H2O = Fe(II)-heme b-[protein] + nitrite + 2 H(+). The catalysed reaction is H2O2 + AH2 = A + 2 H2O. Monomeric heme protein which primary function is to store oxygen and facilitate its diffusion within muscle tissues. Reversibly binds oxygen through a pentacoordinated heme iron and enables its timely and efficient release as needed during periods of heightened demand. Depending on the oxidative conditions of tissues and cells, and in addition to its ability to bind oxygen, it also has a nitrite reductase activity whereby it regulates the production of bioactive nitric oxide. Under stress conditions, like hypoxia and anoxia, it also protects cells against reactive oxygen species thanks to its pseudoperoxidase activity. The chain is Myoglobin (MB) from Ornithorhynchus anatinus (Duckbill platypus).